The primary structure comprises 205 residues: Holliday junction branch migration complex subunit RuvA (205 aa).

Residues 1–64 (MIGHIQGVLT…EDAQLLYGFI (64 aa)) are domain I. The tract at residues 65–143 (SASERSLFRL…DWQPSTPFTD (79 aa)) is domain II. The disordered stretch occupies residues 136–157 (QPSTPFTDRAPLDSQGMDAREH). Residues 144–156 (RAPLDSQGMDARE) are flexible linker. Residues 157 to 205 (HPADARTDAISALQSLGYKENQAEKALQKVYSAEHNSETLIRLALKQLS) form a domain III region.

Belongs to the RuvA family. In terms of assembly, homotetramer. Forms an RuvA(8)-RuvB(12)-Holliday junction (HJ) complex. HJ DNA is sandwiched between 2 RuvA tetramers; dsDNA enters through RuvA and exits via RuvB. An RuvB hexamer assembles on each DNA strand where it exits the tetramer. Each RuvB hexamer is contacted by two RuvA subunits (via domain III) on 2 adjacent RuvB subunits; this complex drives branch migration. In the full resolvosome a probable DNA-RuvA(4)-RuvB(12)-RuvC(2) complex forms which resolves the HJ.

It localises to the cytoplasm. Its function is as follows. The RuvA-RuvB-RuvC complex processes Holliday junction (HJ) DNA during genetic recombination and DNA repair, while the RuvA-RuvB complex plays an important role in the rescue of blocked DNA replication forks via replication fork reversal (RFR). RuvA specifically binds to HJ cruciform DNA, conferring on it an open structure. The RuvB hexamer acts as an ATP-dependent pump, pulling dsDNA into and through the RuvAB complex. HJ branch migration allows RuvC to scan DNA until it finds its consensus sequence, where it cleaves and resolves the cruciform DNA. In Idiomarina loihiensis (strain ATCC BAA-735 / DSM 15497 / L2-TR), this protein is Holliday junction branch migration complex subunit RuvA.